The sequence spans 316 residues: Acetaldehyde dehydrogenase (316 aa).

Serine 11–isoleucine 14 is a binding site for NAD(+). Residue cysteine 131 is the Acyl-thioester intermediate of the active site. NAD(+) contacts are provided by residues serine 162–asparagine 170 and asparagine 289.

Belongs to the acetaldehyde dehydrogenase family. As to quaternary structure, interacts with MhpE.

The catalysed reaction is acetaldehyde + NAD(+) + CoA = acetyl-CoA + NADH + H(+). Its pathway is aromatic compound metabolism; 3-phenylpropanoate degradation. In terms of biological role, catalyzes the conversion of acetaldehyde to acetyl-CoA, using NAD(+) and coenzyme A. Is the final enzyme in the meta-cleavage pathway for the degradation of aromatic compounds. The sequence is that of Acetaldehyde dehydrogenase from Escherichia coli O81 (strain ED1a).